Reading from the N-terminus, the 332-residue chain is GTPase Obg (332 aa).

Residues 1-159 (MKFLDQAKIY…RWVWLRLKLI (159 aa)) enclose the Obg domain. The 169-residue stretch at 160–328 (ADAGLVGLPN…VLRETLRMIR (169 aa)) folds into the OBG-type G domain. GTP-binding positions include 166–173 (GLPNAGKS), 191–195 (FTTLH), 213–216 (DIPG), 280–283 (NKMD), and 309–311 (SAA). Mg(2+) is bound by residues Ser-173 and Thr-193.

It belongs to the TRAFAC class OBG-HflX-like GTPase superfamily. OBG GTPase family. Monomer. Requires Mg(2+) as cofactor.

It is found in the cytoplasm. In terms of biological role, an essential GTPase which binds GTP, GDP and possibly (p)ppGpp with moderate affinity, with high nucleotide exchange rates and a fairly low GTP hydrolysis rate. Plays a role in control of the cell cycle, stress response, ribosome biogenesis and in those bacteria that undergo differentiation, in morphogenesis control. This chain is GTPase Obg, found in Acidiphilium cryptum (strain JF-5).